Reading from the N-terminus, the 350-residue chain is Protein CONSERVED ONLY IN THE GREEN LINEAGE 160, chloroplastic (350 aa).

The transit peptide at 1–46 (MAILSYISATSTTPPIPQDQSPNSRLPTKIILPNKKPEKWSTGVAP) directs the protein to the chloroplast. Over residues 7 to 26 (ISATSTTPPIPQDQSPNSRL) the composition is skewed to polar residues. The segment at 7–58 (ISATSTTPPIPQDQSPNSRLPTKIILPNKKPEKWSTGVAPGEYGGPPTTTKL) is disordered. Phosphoserine is present on serine 117. 4 consecutive transmembrane segments (helical) span residues 213–233 (KNKI…SAYI), 239–259 (IALS…MLGN), 276–296 (ANQP…RWNA), and 304–324 (FMHL…IATF).

Its subcellular location is the plastid. It is found in the chloroplast thylakoid membrane. Functionally, facilitates the assembly of the membrane proton channel of the chloroplastic F-type ATPase. Specifically required for the efficient assembly and integration of the CF(0) subunit c into the chloroplastic ATPase complex in the thylakoid membrane. This is Protein CONSERVED ONLY IN THE GREEN LINEAGE 160, chloroplastic from Arabidopsis thaliana (Mouse-ear cress).